Here is a 738-residue protein sequence, read N- to C-terminus: Catalase-peroxidase (738 aa).

The first 24 residues, 1–24, serve as a signal peptide directing secretion; that stretch reads MEPLFPKRLLSIAVLCVASATAQA. The tryptophyl-tyrosyl-methioninium (Trp-Tyr) (with M-252) cross-link spans 104–226; the sequence is WHAAGTYRMI…FGATEMGLIY (123 aa). The Proton acceptor role is filled by H105. The interval 191 to 213 is disordered; it reads EEVNWGPEGQWLTDRRHSGDRKL. The segment covering 203 to 213 has biased composition (basic and acidic residues); sequence TDRRHSGDRKL. A cross-link (tryptophyl-tyrosyl-methioninium (Tyr-Met) (with W-104)) is located at residues 226–252; the sequence is YVNPEGPHGNPDPIAAAHDIRQAFGRM. Position 267 (H267) interacts with heme b.

This sequence belongs to the peroxidase family. Peroxidase/catalase subfamily. In terms of assembly, homodimer or homotetramer. Heme b is required as a cofactor. Formation of the three residue Trp-Tyr-Met cross-link is important for the catalase, but not the peroxidase activity of the enzyme.

The enzyme catalyses H2O2 + AH2 = A + 2 H2O. It catalyses the reaction 2 H2O2 = O2 + 2 H2O. Its function is as follows. Bifunctional enzyme with both catalase and broad-spectrum peroxidase activity. This chain is Catalase-peroxidase, found in Saccharophagus degradans (strain 2-40 / ATCC 43961 / DSM 17024).